The primary structure comprises 343 residues: Beta-ketoacyl-[acyl-carrier-protein] synthase III 1 (343 aa).

Residues Cys-122 and His-268 contribute to the active site. Residues 269–273 (QANVR) form an ACP-binding region. Residue Asn-299 is part of the active site.

This sequence belongs to the thiolase-like superfamily. FabH family. Homodimer.

The protein resides in the cytoplasm. The catalysed reaction is malonyl-[ACP] + acetyl-CoA + H(+) = 3-oxobutanoyl-[ACP] + CO2 + CoA. It functions in the pathway lipid metabolism; fatty acid biosynthesis. Functionally, essential enzyme that catalyzes the condensation reaction of fatty acid synthesis by the addition to an acyl acceptor of two carbons from malonyl-ACP. Catalyzes the first condensation reaction which initiates fatty acid synthesis and may therefore play a role in governing the total rate of fatty acid production. Possesses both acetoacetyl-ACP synthase and acetyl transacylase activities. Its substrate specificity determines the biosynthesis of branched-chain of fatty acids. This Streptomyces coelicolor (strain ATCC BAA-471 / A3(2) / M145) protein is Beta-ketoacyl-[acyl-carrier-protein] synthase III 1.